We begin with the raw amino-acid sequence, 57 residues long: uncharacterized protein (57 aa).

The protein localises to the plastid. This is an uncharacterized protein from Euglena longa (Euglenophycean alga).